A 156-amino-acid chain; its full sequence is Small ribosomal subunit protein bS16 (156 aa).

Low complexity-rich tracts occupy residues 113–123 and 137–156; these read AESGTTAAATT and EAPA…ASES. The segment at 113–156 is disordered; that stretch reads AESGTTAAATTPKKKKAPKKDEAAEAPAEAAEAPAEAADAASES.

The protein belongs to the bacterial ribosomal protein bS16 family.

In Mycolicibacterium smegmatis (strain ATCC 700084 / mc(2)155) (Mycobacterium smegmatis), this protein is Small ribosomal subunit protein bS16.